A 342-amino-acid polypeptide reads, in one-letter code: Pyrophosphate--fructose 6-phosphate 1-phosphotransferase (342 aa).

Gly-10 contacts diphosphate. Glu-103 provides a ligand contact to Mg(2+). Substrate is bound by residues 126–128, Arg-163, 170–172, Glu-222, Arg-266, and 272–275; these read TID, MGR, and HVQR. The Proton acceptor role is filled by Asp-128.

This sequence belongs to the phosphofructokinase type A (PFKA) family. Mixed-substrate PFK group III subfamily. In terms of assembly, homodimer or homotetramer. Mg(2+) is required as a cofactor.

The protein localises to the cytoplasm. It catalyses the reaction beta-D-fructose 6-phosphate + diphosphate = beta-D-fructose 1,6-bisphosphate + phosphate + H(+). It participates in carbohydrate degradation; glycolysis; D-glyceraldehyde 3-phosphate and glycerone phosphate from D-glucose: step 3/4. Its activity is regulated as follows. Non-allosteric. Catalyzes the phosphorylation of D-fructose 6-phosphate, the first committing step of glycolysis. Uses inorganic phosphate (PPi) as phosphoryl donor instead of ATP like common ATP-dependent phosphofructokinases (ATP-PFKs), which renders the reaction reversible, and can thus function both in glycolysis and gluconeogenesis. Consistently, PPi-PFK can replace the enzymes of both the forward (ATP-PFK) and reverse (fructose-bisphosphatase (FBPase)) reactions. The protein is Pyrophosphate--fructose 6-phosphate 1-phosphotransferase of Streptomyces coelicolor (strain ATCC BAA-471 / A3(2) / M145).